A 267-amino-acid polypeptide reads, in one-letter code: 3-methyl-2-oxobutanoate hydroxymethyltransferase (267 aa).

2 residues coordinate Mg(2+): Asp-46 and Asp-85. 3-methyl-2-oxobutanoate-binding positions include 46 to 47 (DS), Asp-85, and Lys-115. Residue Glu-117 coordinates Mg(2+). Glu-184 (proton acceptor) is an active-site residue.

This sequence belongs to the PanB family. In terms of assembly, homodecamer; pentamer of dimers. Mg(2+) serves as cofactor.

The protein localises to the cytoplasm. The catalysed reaction is 3-methyl-2-oxobutanoate + (6R)-5,10-methylene-5,6,7,8-tetrahydrofolate + H2O = 2-dehydropantoate + (6S)-5,6,7,8-tetrahydrofolate. It participates in cofactor biosynthesis; (R)-pantothenate biosynthesis; (R)-pantoate from 3-methyl-2-oxobutanoate: step 1/2. In terms of biological role, catalyzes the reversible reaction in which hydroxymethyl group from 5,10-methylenetetrahydrofolate is transferred onto alpha-ketoisovalerate to form ketopantoate. In Geobacter metallireducens (strain ATCC 53774 / DSM 7210 / GS-15), this protein is 3-methyl-2-oxobutanoate hydroxymethyltransferase.